Here is a 425-residue protein sequence, read N- to C-terminus: MLDIKDIRLNTEEYKRRLGTRGVKPEEIDELVAEDKKRRELLVETENLKKERNEVSEAIAQAKRNKEDASEQIQAMRKVGTKIKELDEKLAKVEENVKSMAAHLPNLPNPTIPVGPDEDSNVELYKVGTPRKFDFEPKAHWDIGEDLGILDFDRAAKVSGARFVFYKGLGAKLERAVYNFMLDEHAKEGYTEVIPPYIVKSKSMYGTGQFPKFKDQVYQVNGEDMTLIPTAEVPLTNYYREEVIPTEDLPVYFTALSPSFRSEAGSAGRDTRGLIRMHQFNKVEMVKYTKPEDSYNELEKMTKNAGNIMEKLGLPYHVITLSTGDMGFSAAMTHDLEVWMPAQDTYREISSCSNCEDFQARRARIQYRDENGKLQYVHTLNGSGLAVGRTVAAILENYQNEDGSVTIPEALRPYMQGLEVIKKEK.

230–232 (TAE) contributes to the L-serine binding site. An ATP-binding site is contributed by 261–263 (RSE). Residue glutamate 284 coordinates L-serine. 348 to 351 (EISS) lines the ATP pocket. An L-serine-binding site is contributed by serine 383.

This sequence belongs to the class-II aminoacyl-tRNA synthetase family. Type-1 seryl-tRNA synthetase subfamily. As to quaternary structure, homodimer. The tRNA molecule binds across the dimer.

The protein localises to the cytoplasm. The enzyme catalyses tRNA(Ser) + L-serine + ATP = L-seryl-tRNA(Ser) + AMP + diphosphate + H(+). It carries out the reaction tRNA(Sec) + L-serine + ATP = L-seryl-tRNA(Sec) + AMP + diphosphate + H(+). It participates in aminoacyl-tRNA biosynthesis; selenocysteinyl-tRNA(Sec) biosynthesis; L-seryl-tRNA(Sec) from L-serine and tRNA(Sec): step 1/1. In terms of biological role, catalyzes the attachment of serine to tRNA(Ser). Is also able to aminoacylate tRNA(Sec) with serine, to form the misacylated tRNA L-seryl-tRNA(Sec), which will be further converted into selenocysteinyl-tRNA(Sec). This Ligilactobacillus salivarius (strain UCC118) (Lactobacillus salivarius) protein is Serine--tRNA ligase.